The primary structure comprises 356 residues: tRNA pseudouridine synthase D (356 aa).

Aspartate 84 acts as the Nucleophile in catalysis. The TRUD domain maps to 159-302; it reads GVPNYYGPQR…RRGARRPIRV (144 aa).

This sequence belongs to the pseudouridine synthase TruD family.

It carries out the reaction uridine(13) in tRNA = pseudouridine(13) in tRNA. Responsible for synthesis of pseudouridine from uracil-13 in transfer RNAs. The protein is tRNA pseudouridine synthase D of Thermus thermophilus (strain ATCC BAA-163 / DSM 7039 / HB27).